Reading from the N-terminus, the 76-residue chain is U1-cyrtautoxin-As1d (76 aa).

4 disulfide bridges follow: cysteine 23–cysteine 37, cysteine 30–cysteine 51, cysteine 36–cysteine 66, and cysteine 69–cysteine 76.

Belongs to the neurotoxin 21 family. In terms of tissue distribution, expressed by the venom gland.

It is found in the secreted. Neurotoxin with probable ion channel impairing activity. In vivo, is both paralytic and lethal, when injected into lepidopteran larvae. The protein is U1-cyrtautoxin-As1d of Apomastus schlingeri (Trap-door spider).